The primary structure comprises 437 residues: Adenylosuccinate synthetase (437 aa).

Residues 12–18 and 40–42 contribute to the GTP site; these read GDEGKGK and GHT. Catalysis depends on D13, which acts as the Proton acceptor. Positions 13 and 40 each coordinate Mg(2+). IMP contacts are provided by residues 13-16, 38-41, T128, R142, Q223, T238, and R302; these read DEGK and NAGH. Residue H41 is the Proton donor of the active site. 298–304 contributes to the substrate binding site; that stretch reads TTTGRRR. GTP-binding positions include R304, 330–332, and 412–414; these read KLD and SLG.

This sequence belongs to the adenylosuccinate synthetase family. In terms of assembly, homodimer. Requires Mg(2+) as cofactor.

The protein localises to the cytoplasm. It carries out the reaction IMP + L-aspartate + GTP = N(6)-(1,2-dicarboxyethyl)-AMP + GDP + phosphate + 2 H(+). It functions in the pathway purine metabolism; AMP biosynthesis via de novo pathway; AMP from IMP: step 1/2. Functionally, plays an important role in the de novo pathway of purine nucleotide biosynthesis. Catalyzes the first committed step in the biosynthesis of AMP from IMP. The polypeptide is Adenylosuccinate synthetase (Parasynechococcus marenigrum (strain WH8102)).